The chain runs to 185 residues: MEKHLVMYLTRKSIMLLRKYLLVTEFQVSKCGSHIVKIRRDVLYPKRTKYSKYSKCRCSRGREPDGTQLGFGRYGTKSSRAGRLSYRAIEAARRATIGQFRRAMSGQFRRNCKIWVRVLADLPITGKPAEVRMGRGKGNPTGWIARVSTGQIPFEMDGVSLSNARQAARLAAHKPCSSTKFVQWS.

This sequence belongs to the universal ribosomal protein uL16 family.

It is found in the mitochondrion. This Zea mays (Maize) protein is Large ribosomal subunit protein uL16m (RPL16).